Consider the following 192-residue polypeptide: ADP-ribosylation factor-like protein 14 (192 aa).

Gly-2 is lipidated: N-myristoyl glycine. GTP is bound by residues 20–27 (GLDSAGKS), 64–68 (DVGGQ), and 123–126 (NKQD).

The protein belongs to the small GTPase superfamily. Arf family. In terms of assembly, interacts with ARL14EP. As to expression, expressed in immature dendritic cells.

It localises to the cytoplasmic vesicle. Functionally, GTPase that recruits MYO1E to MHC class II-containing vesicles via the effector protein ARL14EP and hence controls the movement of these vesicles along the actin cytoskeleton in dendritic cells. This Homo sapiens (Human) protein is ADP-ribosylation factor-like protein 14 (ARL14).